The chain runs to 89 residues: Small ribosomal subunit protein bS20 (89 aa).

The interval 1 to 20 (MANHKSAEKRARQTIKRTER) is disordered.

Belongs to the bacterial ribosomal protein bS20 family.

Its function is as follows. Binds directly to 16S ribosomal RNA. The protein is Small ribosomal subunit protein bS20 of Campylobacter curvus (strain 525.92).